Reading from the N-terminus, the 496-residue chain is Glycerol kinase (496 aa).

Threonine 12 contributes to the ADP binding site. Residues threonine 12, threonine 13, and serine 14 each contribute to the ATP site. Threonine 12 is a binding site for sn-glycerol 3-phosphate. Position 16 (arginine 16) interacts with ADP. Sn-glycerol 3-phosphate is bound by residues arginine 82, glutamate 83, and tyrosine 134. 3 residues coordinate glycerol: arginine 82, glutamate 83, and tyrosine 134. At histidine 230 the chain carries Phosphohistidine; by HPr. Sn-glycerol 3-phosphate is bound at residue aspartate 244. Residues aspartate 244 and glutamine 245 each contribute to the glycerol site. The ADP site is built by threonine 266 and glycine 309. ATP contacts are provided by threonine 266, glycine 309, glutamine 313, and glycine 410. 2 residues coordinate ADP: glycine 410 and asparagine 414.

Belongs to the FGGY kinase family. As to quaternary structure, homotetramer and homodimer (in equilibrium). The phosphoenolpyruvate-dependent sugar phosphotransferase system (PTS), including enzyme I, and histidine-containing protein (HPr) are required for the phosphorylation, which leads to the activation of the enzyme.

The enzyme catalyses glycerol + ATP = sn-glycerol 3-phosphate + ADP + H(+). It functions in the pathway polyol metabolism; glycerol degradation via glycerol kinase pathway; sn-glycerol 3-phosphate from glycerol: step 1/1. With respect to regulation, activated by phosphorylation and inhibited by fructose 1,6-bisphosphate (FBP). Functionally, key enzyme in the regulation of glycerol uptake and metabolism. Catalyzes the phosphorylation of glycerol to yield sn-glycerol 3-phosphate. The sequence is that of Glycerol kinase from Bacillus cereus (strain Q1).